A 242-amino-acid polypeptide reads, in one-letter code: ATP synthase subunit a (242 aa).

6 helical membrane-spanning segments follow: residues S29–Y49, F84–T104, I114–V134, F140–I160, M181–L201, and F203–Q223.

The protein belongs to the ATPase A chain family. As to quaternary structure, F-type ATPases have 2 components, CF(1) - the catalytic core - and CF(0) - the membrane proton channel. CF(1) has five subunits: alpha(3), beta(3), gamma(1), delta(1), epsilon(1). CF(0) has three main subunits: a(1), b(2) and c(9-12). The alpha and beta chains form an alternating ring which encloses part of the gamma chain. CF(1) is attached to CF(0) by a central stalk formed by the gamma and epsilon chains, while a peripheral stalk is formed by the delta and b chains.

The protein resides in the cell inner membrane. Functionally, key component of the proton channel; it plays a direct role in the translocation of protons across the membrane. This Rickettsia peacockii (strain Rustic) protein is ATP synthase subunit a.